The sequence spans 240 residues: PF03932 family protein CutC (240 aa).

Belongs to the CutC family.

It is found in the cytoplasm. This chain is PF03932 family protein CutC, found in Xanthomonas campestris pv. campestris (strain B100).